Here is a 410-residue protein sequence, read N- to C-terminus: LL-diaminopimelate aminotransferase (410 aa).

Substrate contacts are provided by Tyr15 and Gly42. Pyridoxal 5'-phosphate contacts are provided by residues Tyr72, 108–109, Tyr132, Asn187, Tyr218, and 246–248; these read SK and SFS. Lys109, Tyr132, and Asn187 together coordinate substrate. Lys249 is subject to N6-(pyridoxal phosphate)lysine. 2 residues coordinate pyridoxal 5'-phosphate: Arg257 and Asn292. The substrate site is built by Asn292 and Arg388.

Belongs to the class-I pyridoxal-phosphate-dependent aminotransferase family. LL-diaminopimelate aminotransferase subfamily. In terms of assembly, homodimer. Pyridoxal 5'-phosphate serves as cofactor.

The catalysed reaction is (2S,6S)-2,6-diaminopimelate + 2-oxoglutarate = (S)-2,3,4,5-tetrahydrodipicolinate + L-glutamate + H2O + H(+). It participates in amino-acid biosynthesis; L-lysine biosynthesis via DAP pathway; LL-2,6-diaminopimelate from (S)-tetrahydrodipicolinate (aminotransferase route): step 1/1. In terms of biological role, involved in the synthesis of meso-diaminopimelate (m-DAP or DL-DAP), required for both lysine and peptidoglycan biosynthesis. Catalyzes the direct conversion of tetrahydrodipicolinate to LL-diaminopimelate. This Geobacter metallireducens (strain ATCC 53774 / DSM 7210 / GS-15) protein is LL-diaminopimelate aminotransferase.